A 283-amino-acid polypeptide reads, in one-letter code: Protein/nucleic acid deglycase HchA (283 aa).

Zn(2+) contacts are provided by His86, Glu91, and His123. The Nucleophile role is filled by Cys185.

This sequence belongs to the peptidase C56 family. HchA subfamily. As to quaternary structure, homodimer.

The protein resides in the cytoplasm. It catalyses the reaction N(omega)-(1-hydroxy-2-oxopropyl)-L-arginyl-[protein] + H2O = lactate + L-arginyl-[protein] + H(+). It carries out the reaction N(6)-(1-hydroxy-2-oxopropyl)-L-lysyl-[protein] + H2O = lactate + L-lysyl-[protein] + H(+). The catalysed reaction is S-(1-hydroxy-2-oxopropyl)-L-cysteinyl-[protein] + H2O = lactate + L-cysteinyl-[protein] + H(+). The enzyme catalyses N(omega)-(1-hydroxy-2-oxoethyl)-L-arginyl-[protein] + H2O = L-arginyl-[protein] + glycolate + H(+). It catalyses the reaction N(6)-(1-hydroxy-2-oxoethyl)-L-lysyl-[protein] + H2O = glycolate + L-lysyl-[protein] + H(+). It carries out the reaction S-(1-hydroxy-2-oxoethyl)-L-cysteinyl-[protein] + H2O = glycolate + L-cysteinyl-[protein] + H(+). The catalysed reaction is N(2)-(1-hydroxy-2-oxopropyl)-dGTP + H2O = lactate + dGTP + H(+). The enzyme catalyses N(2)-(1-hydroxy-2-oxopropyl)-GTP + H2O = lactate + GTP + H(+). It catalyses the reaction N(2)-(1-hydroxy-2-oxopropyl)-GDP + H2O = lactate + GDP + H(+). It carries out the reaction N(2)-(1-hydroxy-2-oxopropyl)-GMP + H2O = lactate + GMP + H(+). The catalysed reaction is N(2)-(1-hydroxy-2-oxoethyl)-dGTP + H2O = dGTP + glycolate + H(+). The enzyme catalyses N(2)-(1-hydroxy-2-oxoethyl)-GTP + H2O = glycolate + GTP + H(+). It catalyses the reaction N(2)-(1-hydroxy-2-oxoethyl)-GDP + H2O = glycolate + GDP + H(+). It carries out the reaction N(2)-(1-hydroxy-2-oxoethyl)-GMP + H2O = glycolate + GMP + H(+). The catalysed reaction is an N(2)-(1-hydroxy-2-oxopropyl)-guanosine in RNA + H2O = a guanosine in RNA + lactate + H(+). The enzyme catalyses an N(2)-(1-hydroxy-2-oxopropyl)-2'-deoxyguanosine in DNA + H2O = a 2'-deoxyguanosine in DNA + lactate + H(+). It catalyses the reaction an N(2)-(1-hydroxy-2-oxoethyl)-guanosine in RNA + H2O = a guanosine in RNA + glycolate + H(+). It carries out the reaction an N(2)-(1-hydroxy-2-oxoethyl)-2'-deoxyguanosine in DNA + H2O = a 2'-deoxyguanosine in DNA + glycolate + H(+). Protein and nucleotide deglycase that catalyzes the deglycation of the Maillard adducts formed between amino groups of proteins or nucleotides and reactive carbonyl groups of glyoxals. Thus, functions as a protein deglycase that repairs methylglyoxal- and glyoxal-glycated proteins, and releases repaired proteins and lactate or glycolate, respectively. Deglycates cysteine, arginine and lysine residues in proteins, and thus reactivates these proteins by reversing glycation by glyoxals. Acts on early glycation intermediates (hemithioacetals and aminocarbinols), preventing the formation of Schiff bases and advanced glycation endproducts (AGE). Also functions as a nucleotide deglycase able to repair glycated guanine in the free nucleotide pool (GTP, GDP, GMP, dGTP) and in DNA and RNA. Is thus involved in a major nucleotide repair system named guanine glycation repair (GG repair), dedicated to reversing methylglyoxal and glyoxal damage via nucleotide sanitization and direct nucleic acid repair. Plays an important role in protecting cells from carbonyl stress. In Escherichia coli O139:H28 (strain E24377A / ETEC), this protein is Protein/nucleic acid deglycase HchA.